The sequence spans 235 residues: Sugar fermentation stimulation protein homolog (235 aa).

It belongs to the SfsA family.

This Roseobacter denitrificans (strain ATCC 33942 / OCh 114) (Erythrobacter sp. (strain OCh 114)) protein is Sugar fermentation stimulation protein homolog.